The chain runs to 254 residues: Imidazole glycerol phosphate synthase subunit HisF (254 aa).

Catalysis depends on residues Asp11 and Asp130.

The protein belongs to the HisA/HisF family. As to quaternary structure, heterodimer of HisH and HisF.

The protein localises to the cytoplasm. It catalyses the reaction 5-[(5-phospho-1-deoxy-D-ribulos-1-ylimino)methylamino]-1-(5-phospho-beta-D-ribosyl)imidazole-4-carboxamide + L-glutamine = D-erythro-1-(imidazol-4-yl)glycerol 3-phosphate + 5-amino-1-(5-phospho-beta-D-ribosyl)imidazole-4-carboxamide + L-glutamate + H(+). It participates in amino-acid biosynthesis; L-histidine biosynthesis; L-histidine from 5-phospho-alpha-D-ribose 1-diphosphate: step 5/9. In terms of biological role, IGPS catalyzes the conversion of PRFAR and glutamine to IGP, AICAR and glutamate. The HisF subunit catalyzes the cyclization activity that produces IGP and AICAR from PRFAR using the ammonia provided by the HisH subunit. In Acidiphilium cryptum (strain JF-5), this protein is Imidazole glycerol phosphate synthase subunit HisF.